The chain runs to 288 residues: 4-diphosphocytidyl-2-C-methyl-D-erythritol kinase (288 aa).

Lysine 13 is a catalytic residue. ATP is bound at residue 96–106; the sequence is PMGGGIGGGSS. The active site involves aspartate 138.

Belongs to the GHMP kinase family. IspE subfamily.

The enzyme catalyses 4-CDP-2-C-methyl-D-erythritol + ATP = 4-CDP-2-C-methyl-D-erythritol 2-phosphate + ADP + H(+). The protein operates within isoprenoid biosynthesis; isopentenyl diphosphate biosynthesis via DXP pathway; isopentenyl diphosphate from 1-deoxy-D-xylulose 5-phosphate: step 3/6. Catalyzes the phosphorylation of the position 2 hydroxy group of 4-diphosphocytidyl-2C-methyl-D-erythritol. The sequence is that of 4-diphosphocytidyl-2-C-methyl-D-erythritol kinase from Aliivibrio fischeri (strain MJ11) (Vibrio fischeri).